The primary structure comprises 260 residues: 3-dehydroquinate dehydratase (260 aa).

3-dehydroquinate contacts are provided by residues 50 to 52 (EWR) and Arg-86. His-148 acts as the Proton donor/acceptor in catalysis. Lys-175 functions as the Schiff-base intermediate with substrate in the catalytic mechanism. 3-dehydroquinate-binding residues include Arg-217, Ser-236, and Gln-240.

Belongs to the type-I 3-dehydroquinase family. In terms of assembly, homodimer.

It catalyses the reaction 3-dehydroquinate = 3-dehydroshikimate + H2O. The protein operates within metabolic intermediate biosynthesis; chorismate biosynthesis; chorismate from D-erythrose 4-phosphate and phosphoenolpyruvate: step 3/7. Functionally, involved in the third step of the chorismate pathway, which leads to the biosynthesis of aromatic amino acids. Catalyzes the cis-dehydration of 3-dehydroquinate (DHQ) and introduces the first double bond of the aromatic ring to yield 3-dehydroshikimate. The polypeptide is 3-dehydroquinate dehydratase (Aromatoleum aromaticum (strain DSM 19018 / LMG 30748 / EbN1) (Azoarcus sp. (strain EbN1))).